The sequence spans 267 residues: 4-hydroxy-tetrahydrodipicolinate reductase (267 aa).

NAD(+) is bound by residues 9 to 14 and Asp35; that span reads GAAGRM. Arg36 is a binding site for NADP(+). NAD(+)-binding positions include 99–101 and 123–126; these read GTT and APNY. Catalysis depends on His156, which acts as the Proton donor/acceptor. (S)-2,3,4,5-tetrahydrodipicolinate is bound at residue His157. Lys160 (proton donor) is an active-site residue. Residue 166–167 participates in (S)-2,3,4,5-tetrahydrodipicolinate binding; the sequence is GT.

It belongs to the DapB family.

The protein resides in the cytoplasm. The catalysed reaction is (S)-2,3,4,5-tetrahydrodipicolinate + NAD(+) + H2O = (2S,4S)-4-hydroxy-2,3,4,5-tetrahydrodipicolinate + NADH + H(+). It carries out the reaction (S)-2,3,4,5-tetrahydrodipicolinate + NADP(+) + H2O = (2S,4S)-4-hydroxy-2,3,4,5-tetrahydrodipicolinate + NADPH + H(+). Its pathway is amino-acid biosynthesis; L-lysine biosynthesis via DAP pathway; (S)-tetrahydrodipicolinate from L-aspartate: step 4/4. Functionally, catalyzes the conversion of 4-hydroxy-tetrahydrodipicolinate (HTPA) to tetrahydrodipicolinate. This is 4-hydroxy-tetrahydrodipicolinate reductase from Alkalilimnicola ehrlichii (strain ATCC BAA-1101 / DSM 17681 / MLHE-1).